A 338-amino-acid polypeptide reads, in one-letter code: uncharacterized protein (338 aa).

A Radical SAM core domain is found at 111-334; the sequence is HLGEERVLVP…LELAEKYNLD (224 aa). [4Fe-4S] cluster contacts are provided by cysteine 129, cysteine 133, and cysteine 136.

Requires [4Fe-4S] cluster as cofactor.

This is an uncharacterized protein from Methanocaldococcus jannaschii (strain ATCC 43067 / DSM 2661 / JAL-1 / JCM 10045 / NBRC 100440) (Methanococcus jannaschii).